A 463-amino-acid chain; its full sequence is MRKILVIGDLIADYYLWGKSERLSPEAPVPILEVKKESKSLGGAANVANNLISLGAQVFLCGVVGDDLEGKHFINALKIREVDTSGVLIDKTRCTTLKTRIIVQNQQIVRVDKEIKDPLNADLRKNLLDFVAEKIQEMDGIILSDYNKGVLDFKITQTIIALANKHYKLILCDPKGKDYSKYSHASLITPNRFELEQALHLKLDGDANLLKALQILQETYHIAMPLVTLSEQGIAFLEKNELINCPTIAKEVYDVTGAGDTVIASLTLSLLESKNLKEACEFANAAAAVVVGKMGSALASLEEIALILNQTHPKILSLEKLLNILEYNKQKVVFTNGCFDILHKGHASYLQKAKALGDILIVGLNSDASIKRLKGDKRPIVGEKDRAFLLASLSCVDYIVVFEEDTPIGLIQALKPDILVKGADYLDKEVIGSEFAKETCLMAFEEGYSTSAIIEKIKRAYND.

The interval M1–I315 is ribokinase. N191–E194 contacts ATP. The active site involves D260. Residues F334–D463 are cytidylyltransferase.

In the N-terminal section; belongs to the carbohydrate kinase PfkB family. The protein in the C-terminal section; belongs to the cytidylyltransferase family. In terms of assembly, homodimer.

It carries out the reaction D-glycero-beta-D-manno-heptose 7-phosphate + ATP = D-glycero-beta-D-manno-heptose 1,7-bisphosphate + ADP + H(+). The catalysed reaction is D-glycero-beta-D-manno-heptose 1-phosphate + ATP + H(+) = ADP-D-glycero-beta-D-manno-heptose + diphosphate. It participates in nucleotide-sugar biosynthesis; ADP-L-glycero-beta-D-manno-heptose biosynthesis; ADP-L-glycero-beta-D-manno-heptose from D-glycero-beta-D-manno-heptose 7-phosphate: step 1/4. It functions in the pathway nucleotide-sugar biosynthesis; ADP-L-glycero-beta-D-manno-heptose biosynthesis; ADP-L-glycero-beta-D-manno-heptose from D-glycero-beta-D-manno-heptose 7-phosphate: step 3/4. In terms of biological role, catalyzes the phosphorylation of D-glycero-D-manno-heptose 7-phosphate at the C-1 position to selectively form D-glycero-beta-D-manno-heptose-1,7-bisphosphate. Catalyzes the ADP transfer from ATP to D-glycero-beta-D-manno-heptose 1-phosphate, yielding ADP-D-glycero-beta-D-manno-heptose. This Helicobacter acinonychis (strain Sheeba) protein is Bifunctional protein HldE.